Consider the following 422-residue polypeptide: Tyrosine--tRNA ligase (422 aa).

Residue Y34 participates in L-tyrosine binding. The 'HIGH' region motif lies at 39–48; sequence PTEDSLHVGH. 2 residues coordinate L-tyrosine: Y172 and Q176. The short motif at 232-236 is the 'KMSKS' region element; the sequence is KFGKT. An ATP-binding site is contributed by K235. Residues 354–412 enclose the S4 RNA-binding domain; sequence KDLQEALVLSSLAQSRTQAKNMIISNSISINTKKIVNKNYIIDDNDKLFNQFTLLSRGK.

The protein belongs to the class-I aminoacyl-tRNA synthetase family. TyrS type 1 subfamily. In terms of assembly, homodimer.

Its subcellular location is the cytoplasm. The enzyme catalyses tRNA(Tyr) + L-tyrosine + ATP = L-tyrosyl-tRNA(Tyr) + AMP + diphosphate + H(+). In terms of biological role, catalyzes the attachment of tyrosine to tRNA(Tyr) in a two-step reaction: tyrosine is first activated by ATP to form Tyr-AMP and then transferred to the acceptor end of tRNA(Tyr). This is Tyrosine--tRNA ligase from Buchnera aphidicola subsp. Schizaphis graminum (strain Sg).